The following is a 156-amino-acid chain: Small ribosomal subunit protein uS7 (156 aa).

This sequence belongs to the universal ribosomal protein uS7 family. In terms of assembly, part of the 30S ribosomal subunit. Contacts proteins S9 and S11.

Its function is as follows. One of the primary rRNA binding proteins, it binds directly to 16S rRNA where it nucleates assembly of the head domain of the 30S subunit. Is located at the subunit interface close to the decoding center, probably blocks exit of the E-site tRNA. The sequence is that of Small ribosomal subunit protein uS7 from Pediococcus pentosaceus (strain ATCC 25745 / CCUG 21536 / LMG 10740 / 183-1w).